A 610-amino-acid chain; its full sequence is Elongation factor 4 (610 aa).

Positions 13–195 (SHIRNFSIVA…AIVHKLPAPK (183 aa)) constitute a tr-type G domain. GTP contacts are provided by residues 25–30 (DHGKST) and 142–145 (NKID).

Belongs to the TRAFAC class translation factor GTPase superfamily. Classic translation factor GTPase family. LepA subfamily.

It is found in the cell inner membrane. The enzyme catalyses GTP + H2O = GDP + phosphate + H(+). Required for accurate and efficient protein synthesis under certain stress conditions. May act as a fidelity factor of the translation reaction, by catalyzing a one-codon backward translocation of tRNAs on improperly translocated ribosomes. Back-translocation proceeds from a post-translocation (POST) complex to a pre-translocation (PRE) complex, thus giving elongation factor G a second chance to translocate the tRNAs correctly. Binds to ribosomes in a GTP-dependent manner. In Rhizobium johnstonii (strain DSM 114642 / LMG 32736 / 3841) (Rhizobium leguminosarum bv. viciae), this protein is Elongation factor 4.